A 171-amino-acid chain; its full sequence is Non-specific lipid transfer protein GPI-anchored 19 (171 aa).

Positions 1 to 18 (MILAILALVIATFLYGGA) are cleaved as a signal peptide. 4 disulfides stabilise this stretch: C25–C66, C35–C50, C51–C93, and C64–C103. N-linked (GlcNAc...) asparagine glycosylation is found at N72 and N82. Residues 113–149 (LPANTPVGSPRSAPSPSGTTSPANTPSGSKKFPLSNE) are disordered. Low complexity predominate over residues 118–141 (PVGSPRSAPSPSGTTSPANTPSGS). S147 carries GPI-anchor amidated serine lipidation. N-linked (GlcNAc...) asparagine glycosylation is present at N148. Residues 148 to 171 (NESSSKSNVIILSFVSIALVLAII) constitute a propeptide, removed in mature form.

It belongs to the plant LTP family.

It is found in the cell membrane. Probable lipid transfer protein. The protein is Non-specific lipid transfer protein GPI-anchored 19 of Arabidopsis thaliana (Mouse-ear cress).